Here is a 42-residue protein sequence, read N- to C-terminus: Gastric inhibitory polypeptide (42 aa).

This sequence belongs to the glucagon family.

Its subcellular location is the secreted. Potent stimulator of insulin secretion and relatively poor inhibitor of gastric acid secretion. The sequence is that of Gastric inhibitory polypeptide (GIP) from Sus scrofa (Pig).